Reading from the N-terminus, the 184-residue chain is dCTP deaminase (184 aa).

Residues 107–112, 131–133, Gln-152, Tyr-166, and Gln-176 contribute to the dCTP site; these read KSTYAR and TLE. Glu-133 acts as the Proton donor/acceptor in catalysis.

It belongs to the dCTP deaminase family. In terms of assembly, homotrimer.

It carries out the reaction dCTP + H2O + H(+) = dUTP + NH4(+). It functions in the pathway pyrimidine metabolism; dUMP biosynthesis; dUMP from dCTP (dUTP route): step 1/2. In terms of biological role, catalyzes the deamination of dCTP to dUTP. This Erythrobacter litoralis (strain HTCC2594) protein is dCTP deaminase.